Here is a 165-residue protein sequence, read N- to C-terminus: Probable velvet family sexual development regulator CC1G_12219 (165 aa).

The Velvet domain maps to 1–121; it reads MSNTDAQTSF…SVWGAQVNVR (121 aa).

It belongs to the velvet family.

It localises to the nucleus. Its function is as follows. Velvet-domain-containing protein that probably acts as a positive regulator of sexual development. The chain is Probable velvet family sexual development regulator CC1G_12219 from Coprinopsis cinerea (strain Okayama-7 / 130 / ATCC MYA-4618 / FGSC 9003) (Inky cap fungus).